The primary structure comprises 234 residues: Zein-alpha 19B1 (234 aa).

The signal sequence occupies residues 1-21 (MAAKIFCLLMLLGLSASAATA).

It belongs to the zein family.

Functionally, zeins are major seed storage proteins. The chain is Zein-alpha 19B1 from Zea mays (Maize).